The primary structure comprises 123 residues: uncharacterized protein (123 aa).

A helical transmembrane segment spans residues 5–25 (GTLVIIFAIVLILCIMLLFFY). Residues 33 to 54 (PGVLPPPIPPPTPPPPKKKYDH) are disordered. The segment covering 35-47 (VLPPPIPPPTPPP) has biased composition (pro residues).

This sequence belongs to the asfivirus CP123L family.

It localises to the host membrane. Its subcellular location is the virion. This is an uncharacterized protein from African swine fever virus (isolate Warthog/Namibia/Wart80/1980) (ASFV).